The sequence spans 192 residues: Erythropoietin (192 aa).

A signal peptide spans M1 to G27. 2 disulfide bridges follow: C34–C187 and C56–C60. N-linked (GlcNAc...) asparagine glycosylation is present at N51. 2 N-linked (GlcNAc...) asparagine glycosylation sites follow: N65 and N110. S152 is a glycosylation site (O-linked (GalNAc...) serine).

Belongs to the EPO/TPO family. Produced by kidney or liver of adult mammals and by liver of fetal or neonatal mammals.

It is found in the secreted. Functionally, hormone involved in the regulation of erythrocyte proliferation and differentiation and the maintenance of a physiological level of circulating erythrocyte mass. Binds to EPOR leading to EPOR dimerization and JAK2 activation thereby activating specific downstream effectors, including STAT1 and STAT3. The sequence is that of Erythropoietin (EPO) from Macaca mulatta (Rhesus macaque).